Reading from the N-terminus, the 889-residue chain is MLMTQMTVEQFAHDLGMLPGLLLEQLQAAGVDKRSAADFVTEQDKTRLLDYLRKSHGSSGPRTRITLARKQTTEIKQSDSTGRPRTIEVKVKKTRVLTRQNEPEVIEKSVSEEPAPLKMVETPEPTIVKSVVDAEQMALRAEEARKRSELIARQAAELKEKQEKRRQQAAAQANVKKEPAPAEQESGPATAVTPGSVTEISSKLPETGAAATPATSTAPATTSTTAATKGHAPQKPVVKPEEKGEKKKKPTKQDAWKDEPVKRREPKARGDLSGGQEWRMRKDKHGKYKSDELQSQHAFSVPTEPVIHEVLIPETISVGALAQKMAVKAAEVIKVLMKMGSMVTINQMLDQETAMVVVEEMGHIAKIAASDNPESFLEEVDVSSDEARMEPRAPVVTVMGHVDHGKTSLLDYIRRTRVAGGEAGGITQHIGAYHVETSRGVITFLDTPGHEAFTAMRARGAKITDIVILVVAADDGVMPQTIEAIHHAKAANIPIVVAVNKMDKPEANFDRIKQELVNHGVVPEDWGGDAMFIGVSAKTGLGIDELLEAVLLQAEVLELKAVREAPAKGVVIESRLDKGRGPVATVLVQSGTLRRGDAVLTGAVFGKIRAMLNERGKSISEASTSIPVEIQGLSEVAVAGEVFIALDDERKAREIALFRQGKFRDVRLDKLQVAKMEDVFGQHEDVSTLNLIIKADVQGSCEALVYALKKLETDEVKINVVHSGVGAIIESDINLALASKAVVIGFNCRADLGARKLITSTGVDVRYYNIIYEAVDEVKKALSGMMMPDRKEKILGMVDIREIYRISKVGVVAGCYVLEGLIKRDALVRLLRDGLVIHSGSLDSLKRFKEDVREVKSGFECGLSLKNFNDIQQGDQIEVYEIVETARVL.

The segment at 158–296 (LKEKQEKRRQ…KYKSDELQSQ (139 aa)) is disordered. The segment covering 209 to 228 (AAATPATSTAPATTSTTAAT) has biased composition (low complexity). The segment covering 238 to 270 (VKPEEKGEKKKKPTKQDAWKDEPVKRREPKARG) has biased composition (basic and acidic residues). The 170-residue stretch at 391 to 560 (PRAPVVTVMG…LLQAEVLELK (170 aa)) folds into the tr-type G domain. Positions 400–407 (GHVDHGKT) are G1. 400-407 (GHVDHGKT) contributes to the GTP binding site. Positions 425–429 (GITQH) are G2. The interval 446-449 (DTPG) is G3. Residues 446–450 (DTPGH) and 500–503 (NKMD) contribute to the GTP site. Positions 500 to 503 (NKMD) are G4. Positions 536–538 (SAK) are G5.

This sequence belongs to the TRAFAC class translation factor GTPase superfamily. Classic translation factor GTPase family. IF-2 subfamily.

The protein resides in the cytoplasm. Its function is as follows. One of the essential components for the initiation of protein synthesis. Protects formylmethionyl-tRNA from spontaneous hydrolysis and promotes its binding to the 30S ribosomal subunits. Also involved in the hydrolysis of GTP during the formation of the 70S ribosomal complex. This chain is Translation initiation factor IF-2, found in Nitrosomonas europaea (strain ATCC 19718 / CIP 103999 / KCTC 2705 / NBRC 14298).